A 553-amino-acid polypeptide reads, in one-letter code: Mannuronan C5-epimerase AlgE4 (553 aa).

PbH1 repeat units follow at residues 133 to 155, 157 to 179, 180 to 202, 204 to 226, 234 to 256, 257 to 279, 280 to 301, and 320 to 342; these read DRDVTIERVEVREMSGYGFDPHE, TINLTIRDSVAHDNGLDGFVADY, LVDSVFENNVAYANDRHGFNVVT, THDFVMTNNVAYGNGSSGLVVQR, PSNILIDGGAYYDNAREGVLLKM, TSDITLQNADIHGNGSSGVRVYG, AQDVQILDNQIHDNAQAAAVPE, and TLNTRIEGNTISGSANSTYGIQE. Positions 367–427 are disordered; it reads YGPHSTVSGE…DILDGGAGRD (61 aa). 2 Hemolysin-type calcium-binding repeats span residues 403 to 420 and 421 to 438; these read QGGSGADRLDGGAGDDIL and DGGAGRDRLSGGAGADTF.

This sequence belongs to the D-mannuronate C5-epimerase family. It depends on Ca(2+) as a cofactor.

The protein localises to the secreted. The enzyme catalyses [(1-&gt;4)-beta-D-mannuronosyl](n) = [alginate](n). It participates in glycan biosynthesis; alginate biosynthesis. Its activity is regulated as follows. Inhibited by zinc. Its function is as follows. Converts beta-D-mannuronic acid (M) to alpha-L-guluronic acid (G), but introduces almost exclusively MG blocks, producing a polymer with non-gel-forming capacity. This chain is Mannuronan C5-epimerase AlgE4, found in Azotobacter vinelandii.